Here is a 206-residue protein sequence, read N- to C-terminus: MTNSRLEKLAADLQRILGDRQIDISCALGELTLLVHSRDLPDIAEVLRDHQDLGFDTLIDLCGVDFSEYSTDTHAGYKREDRRFAVVYHLLSVKHNHRLRVRVFAEDNEFPMVDSVMPVWPSANWFEREAFDLFGIIFNNHPDLRRILTDYGFIGNPFRKDFPLSGHVEMRYDPDQKRVVYQPVTIEPREITPYVIREEQYGREEI.

This sequence belongs to the complex I 30 kDa subunit family. In terms of assembly, NDH-1 is composed of 14 different subunits. Subunits NuoB, C, D, E, F, and G constitute the peripheral sector of the complex.

Its subcellular location is the cell inner membrane. The catalysed reaction is a quinone + NADH + 5 H(+)(in) = a quinol + NAD(+) + 4 H(+)(out). NDH-1 shuttles electrons from NADH, via FMN and iron-sulfur (Fe-S) centers, to quinones in the respiratory chain. The immediate electron acceptor for the enzyme in this species is believed to be ubiquinone. Couples the redox reaction to proton translocation (for every two electrons transferred, four hydrogen ions are translocated across the cytoplasmic membrane), and thus conserves the redox energy in a proton gradient. The sequence is that of NADH-quinone oxidoreductase subunit C from Nitrosomonas europaea (strain ATCC 19718 / CIP 103999 / KCTC 2705 / NBRC 14298).